The sequence spans 130 residues: Small ribosomal subunit protein uS9 (130 aa).

Positions 109–130 (RMKERKKYGLKGARRAPQFSKR) are disordered. A compositionally biased stretch (basic residues) spans 111 to 130 (KERKKYGLKGARRAPQFSKR).

The protein belongs to the universal ribosomal protein uS9 family.

This chain is Small ribosomal subunit protein uS9, found in Alkaliphilus metalliredigens (strain QYMF).